The sequence spans 129 residues: Small ribosomal subunit protein uS11 (129 aa).

The protein belongs to the universal ribosomal protein uS11 family. In terms of assembly, part of the 30S ribosomal subunit. Interacts with proteins S7 and S18. Binds to IF-3.

Its function is as follows. Located on the platform of the 30S subunit, it bridges several disparate RNA helices of the 16S rRNA. Forms part of the Shine-Dalgarno cleft in the 70S ribosome. The protein is Small ribosomal subunit protein uS11 of Marinobacter nauticus (strain ATCC 700491 / DSM 11845 / VT8) (Marinobacter aquaeolei).